The primary structure comprises 545 residues: Chaperonin GroEL 2 (545 aa).

Residues 29–32, 86–90, G413, 479–481, and D495 each bind ATP; these read TLGP, DGTTT, and NAA.

Belongs to the chaperonin (HSP60) family. As to quaternary structure, forms a cylinder of 14 subunits composed of two heptameric rings stacked back-to-back. Interacts with the co-chaperonin GroES.

The protein resides in the cytoplasm. The enzyme catalyses ATP + H2O + a folded polypeptide = ADP + phosphate + an unfolded polypeptide.. Its function is as follows. Together with its co-chaperonin GroES, plays an essential role in assisting protein folding. The GroEL-GroES system forms a nano-cage that allows encapsulation of the non-native substrate proteins and provides a physical environment optimized to promote and accelerate protein folding. The sequence is that of Chaperonin GroEL 2 from Prochlorococcus marinus (strain MIT 9312).